We begin with the raw amino-acid sequence, 229 residues long: Cytochrome c oxidase subunit 2 (229 aa).

Over 1–14 the chain is Mitochondrial intermembrane; sequence MANPTHLGFQDAMS. Residues 15 to 45 form a helical membrane-spanning segment; the sequence is PLMEELLYFHDHTLMILFLISSLVFYMIFAL. The Mitochondrial matrix segment spans residues 46–59; the sequence is LFPKLYYPNTSDVQ. Residues 60–87 form a helical membrane-spanning segment; that stretch reads EVEVIWTVLPAIVLISIALPSLRTLYLM. The Mitochondrial intermembrane portion of the chain corresponds to 88–229; that stretch reads DETNNPCLTI…QLWLEDSILS (142 aa). Residues His-161, Cys-196, Glu-198, Cys-200, His-204, and Met-207 each contribute to the Cu cation site. Glu-198 is a Mg(2+) binding site.

The protein belongs to the cytochrome c oxidase subunit 2 family. Component of the cytochrome c oxidase (complex IV, CIV), a multisubunit enzyme composed of 14 subunits. The complex is composed of a catalytic core of 3 subunits MT-CO1, MT-CO2 and MT-CO3, encoded in the mitochondrial DNA, and 11 supernumerary subunits COX4I, COX5A, COX5B, COX6A, COX6B, COX6C, COX7A, COX7B, COX7C, COX8 and NDUFA4, which are encoded in the nuclear genome. The complex exists as a monomer or a dimer and forms supercomplexes (SCs) in the inner mitochondrial membrane with NADH-ubiquinone oxidoreductase (complex I, CI) and ubiquinol-cytochrome c oxidoreductase (cytochrome b-c1 complex, complex III, CIII), resulting in different assemblies (supercomplex SCI(1)III(2)IV(1) and megacomplex MCI(2)III(2)IV(2)). Found in a complex with TMEM177, COA6, COX18, COX20, SCO1 and SCO2. Interacts with TMEM177 in a COX20-dependent manner. Interacts with COX20. Interacts with COX16. Cu cation serves as cofactor.

The protein resides in the mitochondrion inner membrane. The catalysed reaction is 4 Fe(II)-[cytochrome c] + O2 + 8 H(+)(in) = 4 Fe(III)-[cytochrome c] + 2 H2O + 4 H(+)(out). Its function is as follows. Component of the cytochrome c oxidase, the last enzyme in the mitochondrial electron transport chain which drives oxidative phosphorylation. The respiratory chain contains 3 multisubunit complexes succinate dehydrogenase (complex II, CII), ubiquinol-cytochrome c oxidoreductase (cytochrome b-c1 complex, complex III, CIII) and cytochrome c oxidase (complex IV, CIV), that cooperate to transfer electrons derived from NADH and succinate to molecular oxygen, creating an electrochemical gradient over the inner membrane that drives transmembrane transport and the ATP synthase. Cytochrome c oxidase is the component of the respiratory chain that catalyzes the reduction of oxygen to water. Electrons originating from reduced cytochrome c in the intermembrane space (IMS) are transferred via the dinuclear copper A center (CU(A)) of subunit 2 and heme A of subunit 1 to the active site in subunit 1, a binuclear center (BNC) formed by heme A3 and copper B (CU(B)). The BNC reduces molecular oxygen to 2 water molecules using 4 electrons from cytochrome c in the IMS and 4 protons from the mitochondrial matrix. This chain is Cytochrome c oxidase subunit 2 (MT-CO2), found in Alligator mississippiensis (American alligator).